Reading from the N-terminus, the 211-residue chain is Regulator of G-protein signaling 2 (211 aa).

2 disordered regions span residues 14–33 (GPMD…REKM) and 49–71 (LQNS…TFIK). The tract at residues 32–66 (KMKRTLLKDWKSRLSYFLQNSSSPGKPKTGKKSKQ) is necessary for membrane association. The tract at residues 79 to 116 (LWSEAFDELLASKYGLAAFRAFLKSEFCEENIEFWLAC) is necessary to inhibit protein synthesis. An RGS domain is found at 83–199 (AFDELLASKY…LESEFYQDLC (117 aa)).

As to quaternary structure, interacts with GNAQ. Does not interact with GNAI1 and GNAI3. Interacts with EIF2B5. Interacts with PRKG1 (isoform alpha). In terms of processing, phosphorylated by protein kinase C. Phosphorylation by PRKG1 leads to activation of RGS2 activity.

It is found in the cell membrane. The protein resides in the cytoplasm. Its subcellular location is the nucleus. It localises to the nucleolus. Its function is as follows. Regulates G protein-coupled receptor signaling cascades. Inhibits signal transduction by increasing the GTPase activity of G protein alpha subunits, thereby driving them into their inactive GDP-bound form. It is involved in the negative regulation of the angiotensin-activated signaling pathway. Plays a role in the regulation of blood pressure in response to signaling via G protein-coupled receptors and GNAQ. Plays a role in regulating the constriction and relaxation of vascular smooth muscle. Binds EIF2B5 and blocks its activity, thereby inhibiting the translation of mRNA into protein. The chain is Regulator of G-protein signaling 2 (RGS2) from Bos taurus (Bovine).